A 357-amino-acid polypeptide reads, in one-letter code: Serine proteinase inhibitor 1 (357 aa).

It belongs to the serpin family. Poxviruses subfamily.

It localises to the host cytoplasm. Functionally, plays a role in mediating viral host range. May act to inhibit a caspase independent form of apoptosis to allow efficient virus replication in infected cells. The polypeptide is Serine proteinase inhibitor 1 (OPG208) (Monkeypox virus).